A 149-amino-acid chain; its full sequence is Large ribosomal subunit protein bL9 (149 aa).

It belongs to the bacterial ribosomal protein bL9 family.

Binds to the 23S rRNA. The polypeptide is Large ribosomal subunit protein bL9 (Thermotoga maritima (strain ATCC 43589 / DSM 3109 / JCM 10099 / NBRC 100826 / MSB8)).